We begin with the raw amino-acid sequence, 322 residues long: Manganese-dependent ADP-ribose/CDP-alcohol diphosphatase (322 aa).

The Zn(2+) site is built by Asp-13, Gln-15, Asp-60, Asn-96, His-228, His-265, and His-267.

Belongs to the ADPRibase-Mn family. Monomer. Mg(2+) is required as a cofactor.

The enzyme catalyses CDP-choline + H2O = phosphocholine + CMP + 2 H(+). The catalysed reaction is ADP-D-ribose + H2O = D-ribose 5-phosphate + AMP + 2 H(+). It catalyses the reaction CDP-glycerol + H2O = sn-glycerol 3-phosphate + CMP + 2 H(+). Hydrolyzes ADP-ribose, IDP-ribose, CDP-glycerol, CDP-choline and CDP-ethanolamine, but not other non-reducing ADP-sugars or CDP-glucose. In Danio rerio (Zebrafish), this protein is Manganese-dependent ADP-ribose/CDP-alcohol diphosphatase (adprm).